We begin with the raw amino-acid sequence, 91 residues long: Small ribosomal subunit protein uS19 (91 aa).

This sequence belongs to the universal ribosomal protein uS19 family.

Its function is as follows. Protein S19 forms a complex with S13 that binds strongly to the 16S ribosomal RNA. In Trichodesmium erythraeum (strain IMS101), this protein is Small ribosomal subunit protein uS19.